The following is a 96-amino-acid chain: Muconolactone Delta-isomerase (96 aa).

It belongs to the muconolactone Delta-isomerase family. As to quaternary structure, homodecamer.

It carries out the reaction (S)-muconolactone = (4,5-dihydro-5-oxofuran-2-yl)-acetate. The protein operates within aromatic compound metabolism; beta-ketoadipate pathway; 5-oxo-4,5-dihydro-2-furylacetate from catechol: step 3/3. This is Muconolactone Delta-isomerase (catC) from Pseudomonas aeruginosa (strain ATCC 15692 / DSM 22644 / CIP 104116 / JCM 14847 / LMG 12228 / 1C / PRS 101 / PAO1).